The chain runs to 1774 residues: 6-methylsalicylic acid synthase (1774 aa).

Residues 1-14 (MHSAATSTYPSGKT) are compositionally biased toward polar residues. The interval 1–21 (MHSAATSTYPSGKTSPAPVGT) is disordered. The region spanning 32–457 (SNDVAVVGMA…GTVSHAVIEE (426 aa)) is the Ketosynthase family 3 (KS3) domain. Positions 186–238 (RISYHLNLMGPSTAVDAACASSLVAIHHGVQAIRLGESKVAIVGGVNALCGPG) are acyltransferase. Active-site for beta-ketoacyl synthase activity residues include Cys-204, His-339, and His-379. The segment at 642–676 (NGITPQAVIGHSVGEIAASVVAGALSPAEGALIVT) is acetyl/malonyl transferases. Ser-653 acts as the For malonyltransferase activity in catalysis. An N-terminal hotdog fold region spans residues 926–1045 (HTLLGQRIPV…AYWDRKVAGS (120 aa)). The PKS/mFAS DH domain occupies 926 to 1202 (HTLLGQRIPV…FSEIEGTPGV (277 aa)). The active-site Proton acceptor; for dehydratase activity is His-958. Residues 1059–1202 (VTKLADNFSI…FSEIEGTPGV (144 aa)) are C-terminal hotdog fold. Asp-1123 (proton donor; for dehydratase activity) is an active-site residue. The tract at residues 1403–1450 (GPRLLPRPEGTYLITGGLGVLGLEVADFLVEKGARRLLLISRRALPPR) is 2-oxoacyl reductase. Residue 1419 to 1424 (GLGVLG) participates in NADP(+) binding. A Carrier domain is found at 1698–1772 (AYLDEKIRGC…HLAVWFAEKL (75 aa)). O-(pantetheine 4'-phosphoryl)serine is present on Ser-1732.

In terms of assembly, homomultimer.

It carries out the reaction 3 malonyl-CoA + acetyl-CoA + NADPH + 3 H(+) = 6-methylsalicylate + 3 CO2 + NADP(+) + 4 CoA + H2O. It functions in the pathway mycotoxin biosynthesis; patulin biosynthesis. Its function is as follows. This multifunctional enzyme is a polyketide synthase. It catalyzes a total of 11 steps by seven different component enzymes, in the biosynthesis of the antibiotic patulin. In Penicillium patulum (Penicillium griseofulvum), this protein is 6-methylsalicylic acid synthase.